The sequence spans 318 residues: MHQEQNKIIKILFSEYYEKAELDLPNDMELREFAYQPFDSETYVRHLSFSSPQELRQYILQNVPLHLYYSSARYQLPSAKEMDEKGWLGSDLLFDLDADEICEVKVRRFCPQDGYETLASNCNGEPPIEYAEITTECIMKVFEKALLIRDILKEDFGLNARIFFSGNRGFHLRVTCYEDCALLDPDDRKEIAEYFTSPKPPVIYEGNPGWSGRIAKGIEGINIDTQVTIDIRRLVRIPGSLNGKAGLMVVEIKNDKFEYGEWLSPFDGDCIFLPYVSAELTLFNNKYTVKRTYPIKIDTRIGVYLALKGLGKVKAYVR.

Catalysis depends on residues Asp95, Asp97, and Asp224.

It belongs to the eukaryotic-type primase small subunit family. Heterodimer of a small subunit (PriS) and a large subunit (PriL). Mg(2+) is required as a cofactor. The cofactor is Mn(2+).

In terms of biological role, catalytic subunit of DNA primase, an RNA polymerase that catalyzes the synthesis of short RNA molecules used as primers for DNA polymerase during DNA replication. The small subunit contains the primase catalytic core and has DNA synthesis activity on its own. Binding to the large subunit stabilizes and modulates the activity, increasing the rate of DNA synthesis while decreasing the length of the DNA fragments, and conferring RNA synthesis capability. The DNA polymerase activity may enable DNA primase to also catalyze primer extension after primer synthesis. May also play a role in DNA repair. This chain is DNA primase small subunit PriS, found in Sulfurisphaera tokodaii (strain DSM 16993 / JCM 10545 / NBRC 100140 / 7) (Sulfolobus tokodaii).